We begin with the raw amino-acid sequence, 531 residues long: Apolipoprotein N-acyltransferase (531 aa).

Transmembrane regions (helical) follow at residues 8 to 28 (IILL…LLAV), 34 to 54 (FGIF…IDGV), 69 to 89 (PAAI…WWLG), 105 to 125 (LTVV…VVIA), 136 to 156 (IAAL…LFTG), 178 to 198 (VVNL…PALI), and 206 to 226 (AGLA…FYRL). One can recognise a CN hydrolase domain in the interval 243 to 493 (VQPVIDQAKK…RGVIDTILPG (251 aa)). Glutamate 287 functions as the Proton acceptor in the catalytic mechanism. Lysine 351 is a catalytic residue. The Nucleophile role is filled by cysteine 405. A helical transmembrane segment spans residues 507–527 (IFWLTTGILFLVAAISRLGFN).

Belongs to the CN hydrolase family. Apolipoprotein N-acyltransferase subfamily.

It localises to the cell inner membrane. It catalyses the reaction N-terminal S-1,2-diacyl-sn-glyceryl-L-cysteinyl-[lipoprotein] + a glycerophospholipid = N-acyl-S-1,2-diacyl-sn-glyceryl-L-cysteinyl-[lipoprotein] + a 2-acyl-sn-glycero-3-phospholipid + H(+). It functions in the pathway protein modification; lipoprotein biosynthesis (N-acyl transfer). Its function is as follows. Catalyzes the phospholipid dependent N-acylation of the N-terminal cysteine of apolipoprotein, the last step in lipoprotein maturation. The sequence is that of Apolipoprotein N-acyltransferase from Rhizobium meliloti (strain 1021) (Ensifer meliloti).